The following is a 637-amino-acid chain: Neurexin-3-beta (637 aa).

An N-terminal signal peptide occupies residues 1 to 35 (MHLRIHARRSPPRRPAWTLGIWFLFWGCIVSSVWS). The Extracellular segment spans residues 36–562 (SSNVASSSST…EVIRESSSTT (527 aa)). Positions 43–52 (SSTSSSPGSH) are enriched in low complexity. A disordered region spans residues 43 to 65 (SSTSSSPGSHSQHEHHFHGSKHH). Residues 55 to 65 (HEHHFHGSKHH) are compositionally biased toward basic residues. Residues 85–255 (ATYIFGKSGG…NPNIKINGSV (171 aa)) enclose the Laminin G-like domain. Residues aspartate 137 and isoleucine 154 each contribute to the Ca(2+) site. N-linked (GlcNAc...) asparagine glycosylation occurs at asparagine 184. Residues isoleucine 206 and asparagine 208 each coordinate Ca(2+). Residues asparagine 252 and asparagine 296 are each glycosylated (N-linked (GlcNAc...) asparagine). Residues 289–310 (ATTTTRKNRSTASIQPTSDDLV) form a disordered region. Over residues 298-310 (STASIQPTSDDLV) the composition is skewed to polar residues. An O-linked (Xyl...) (heparan sulfate) serine glycan is attached at serine 312. The helical transmembrane segment at 563 to 583 (GMVVGIVAAAALCILILLYAM) threads the bilayer. Over 584 to 637 (YKYRNRDEGSYQVDETRNYISNSAQSNGTLMKEKQQSSKSGHKKQKNKDREYYV) the chain is Cytoplasmic. The interval 605 to 637 (NSAQSNGTLMKEKQQSSKSGHKKQKNKDREYYV) is disordered.

Belongs to the neurexin family. Weakly interacts with CBLN1 and CBLN2. Very weak binding, if any, to CBLN4. Specific isoforms bind neuroligins NLGN1, NLGN2 and NLGN3. Interacts with CLSTN3. Post-translationally, processed by alpha-secretase leading to the formation of an extracellular soluble protein as well as a C-terminal membrane-embedded fragment (CTF). Proteolysis of these CTFs by gamma-secretase releases intracellular domains (ICDs) and extracellular peptides. In terms of processing, O-glycosylated; contains heparan sulfate. Heparan sulfate attachment is required for synapse development by mediating interactions with neuroligins. Expressed in the blood vessel walls (at protein level).

Its subcellular location is the presynaptic cell membrane. Its function is as follows. Neuronal cell surface protein that may be involved in cell recognition and cell adhesion. May mediate intracellular signaling. Functions as part of a trans-synaptic complex by binding to cerebellins and postsynaptic GRID1. This interaction helps regulate the activity of NMDA and AMPA receptors at hippocampal synapses without affecting synapse formation. NRXN3B-CBLN2-GRID1 complex transduce presynaptic signals into postsynaptic AMPAR response. This Homo sapiens (Human) protein is Neurexin-3-beta.